The following is a 241-amino-acid chain: Demethylmenaquinone methyltransferase (241 aa).

Residues Thr-60, Asp-81, and 106-107 contribute to the S-adenosyl-L-methionine site; that span reads DA.

This sequence belongs to the class I-like SAM-binding methyltransferase superfamily. MenG/UbiE family.

The catalysed reaction is a 2-demethylmenaquinol + S-adenosyl-L-methionine = a menaquinol + S-adenosyl-L-homocysteine + H(+). It functions in the pathway quinol/quinone metabolism; menaquinone biosynthesis; menaquinol from 1,4-dihydroxy-2-naphthoate: step 2/2. In terms of biological role, methyltransferase required for the conversion of demethylmenaquinol (DMKH2) to menaquinol (MKH2). The protein is Demethylmenaquinone methyltransferase of Staphylococcus epidermidis (strain ATCC 35984 / DSM 28319 / BCRC 17069 / CCUG 31568 / BM 3577 / RP62A).